The chain runs to 257 residues: Acetylglutamate kinase (257 aa).

Substrate is bound by residues 41-42, Arg-63, and Asn-155; that span reads GG.

This sequence belongs to the acetylglutamate kinase family. ArgB subfamily.

It localises to the cytoplasm. The catalysed reaction is N-acetyl-L-glutamate + ATP = N-acetyl-L-glutamyl 5-phosphate + ADP. It participates in amino-acid biosynthesis; L-arginine biosynthesis; N(2)-acetyl-L-ornithine from L-glutamate: step 2/4. Catalyzes the ATP-dependent phosphorylation of N-acetyl-L-glutamate. This Solibacter usitatus (strain Ellin6076) protein is Acetylglutamate kinase.